A 140-amino-acid chain; its full sequence is Large ribosomal subunit protein uL11 (140 aa).

Belongs to the universal ribosomal protein uL11 family. As to quaternary structure, part of the ribosomal stalk of the 50S ribosomal subunit. Interacts with L10 and the large rRNA to form the base of the stalk. L10 forms an elongated spine to which L12 dimers bind in a sequential fashion forming a multimeric L10(L12)X complex. Post-translationally, one or more lysine residues are methylated.

Forms part of the ribosomal stalk which helps the ribosome interact with GTP-bound translation factors. This is Large ribosomal subunit protein uL11 from Staphylococcus epidermidis (strain ATCC 35984 / DSM 28319 / BCRC 17069 / CCUG 31568 / BM 3577 / RP62A).